The primary structure comprises 74 residues: Consomatin Gh1 (74 aa).

The first 22 residues, methionine 1 to glycine 22, serve as a signal peptide directing secretion. A propeptide spanning residues glycine 23–arginine 57 is cleaved from the precursor. Cysteine 65 and cysteine 70 are oxidised to a cystine. Tryptophan 67 carries the D-tryptophan modification. 4-hydroxyproline occurs at positions 71, 72, and 74.

It belongs to the conotoxin C superfamily. Consomatin family. In terms of tissue distribution, expressed by the venom duct.

The protein resides in the secreted. Its function is as follows. Moderately activates human somatostatin receptors (SSTR) with a preferential activation of SSTR1 and SSTR4. In vivo, does not cause behavioral changes in mice within a few minutes of intracranial injection, but causes a progressive loss of movement thereafter. Four to five hours after injection, mice recover, even with the highest dose tested. Shows antinociception and antihyperalgesia activities in two mouse models of acute pain, most probably by acting outside the central nervous system. This Conus grahami (Cone snail) protein is Consomatin Gh1.